Consider the following 483-residue polypeptide: Glutamyl-tRNA(Gln) amidotransferase subunit A (483 aa).

Catalysis depends on charge relay system residues lysine 75 and serine 150. The active-site Acyl-ester intermediate is the serine 174.

Belongs to the amidase family. GatA subfamily. In terms of assembly, heterotrimer of A, B and C subunits.

It carries out the reaction L-glutamyl-tRNA(Gln) + L-glutamine + ATP + H2O = L-glutaminyl-tRNA(Gln) + L-glutamate + ADP + phosphate + H(+). Its function is as follows. Allows the formation of correctly charged Gln-tRNA(Gln) through the transamidation of misacylated Glu-tRNA(Gln) in organisms which lack glutaminyl-tRNA synthetase. The reaction takes place in the presence of glutamine and ATP through an activated gamma-phospho-Glu-tRNA(Gln). The protein is Glutamyl-tRNA(Gln) amidotransferase subunit A of Legionella pneumophila (strain Corby).